Reading from the N-terminus, the 615-residue chain is 1-deoxy-D-xylulose-5-phosphate synthase (615 aa).

Thiamine diphosphate is bound by residues His-77 and 118–120 (GHS). Asp-149 contacts Mg(2+). Thiamine diphosphate contacts are provided by residues 150–151 (GA), Asn-178, Tyr-286, and Glu-367. A Mg(2+)-binding site is contributed by Asn-178.

Belongs to the transketolase family. DXPS subfamily. As to quaternary structure, homodimer. It depends on Mg(2+) as a cofactor. Thiamine diphosphate serves as cofactor.

The enzyme catalyses D-glyceraldehyde 3-phosphate + pyruvate + H(+) = 1-deoxy-D-xylulose 5-phosphate + CO2. Its pathway is metabolic intermediate biosynthesis; 1-deoxy-D-xylulose 5-phosphate biosynthesis; 1-deoxy-D-xylulose 5-phosphate from D-glyceraldehyde 3-phosphate and pyruvate: step 1/1. In terms of biological role, catalyzes the acyloin condensation reaction between C atoms 2 and 3 of pyruvate and glyceraldehyde 3-phosphate to yield 1-deoxy-D-xylulose-5-phosphate (DXP). The chain is 1-deoxy-D-xylulose-5-phosphate synthase from Glaesserella parasuis serovar 5 (strain SH0165) (Haemophilus parasuis).